We begin with the raw amino-acid sequence, 424 residues long: GTPase Obg (424 aa).

The region spanning 1–160 (MFDRVEIRIK…YELILELKLI (160 aa)) is the Obg domain. Residues 161 to 328 (ADVAIIGYPN…LLDKVAEKLA (168 aa)) enclose the OBG-type G domain. GTP contacts are provided by residues 167–174 (GYPNVGKS), 192–196 (FTTLS), 213–216 (EVPG), 280–283 (NKID), and 309–311 (SAL). 2 residues coordinate Mg(2+): Ser-174 and Thr-194. Positions 349–424 (PAPKGKMGFH…IITGRLEWYL (76 aa)) constitute an OCT domain.

This sequence belongs to the TRAFAC class OBG-HflX-like GTPase superfamily. OBG GTPase family. As to quaternary structure, monomer. Mg(2+) is required as a cofactor.

The protein localises to the cytoplasm. In terms of biological role, an essential GTPase which binds GTP, GDP and possibly (p)ppGpp with moderate affinity, with high nucleotide exchange rates and a fairly low GTP hydrolysis rate. Plays a role in control of the cell cycle, stress response, ribosome biogenesis and in those bacteria that undergo differentiation, in morphogenesis control. The polypeptide is GTPase Obg (Dehalococcoides mccartyi (strain ATCC BAA-2266 / KCTC 15142 / 195) (Dehalococcoides ethenogenes (strain 195))).